A 411-amino-acid polypeptide reads, in one-letter code: LL-diaminopimelate aminotransferase (411 aa).

2 residues coordinate substrate: Y15 and G42. Pyridoxal 5'-phosphate is bound by residues Y72, 108–109 (AK), Y132, N188, Y219, and 247–249 (SFS). Substrate-binding residues include K109, Y132, and N188. Position 250 is an N6-(pyridoxal phosphate)lysine (K250). R258 and N293 together coordinate pyridoxal 5'-phosphate. Positions 293 and 389 each coordinate substrate.

This sequence belongs to the class-I pyridoxal-phosphate-dependent aminotransferase family. LL-diaminopimelate aminotransferase subfamily. In terms of assembly, homodimer. Requires pyridoxal 5'-phosphate as cofactor.

The catalysed reaction is (2S,6S)-2,6-diaminopimelate + 2-oxoglutarate = (S)-2,3,4,5-tetrahydrodipicolinate + L-glutamate + H2O + H(+). The protein operates within amino-acid biosynthesis; L-lysine biosynthesis via DAP pathway; LL-2,6-diaminopimelate from (S)-tetrahydrodipicolinate (aminotransferase route): step 1/1. In terms of biological role, involved in the synthesis of meso-diaminopimelate (m-DAP or DL-DAP), required for both lysine and peptidoglycan biosynthesis. Catalyzes the direct conversion of tetrahydrodipicolinate to LL-diaminopimelate. Is also able to catalyze the reverse reaction in vitro, i.e. the transamination of LL-diaminopimelate with 2-oxoglutarate to produce tetrahydrodipicolinate and glutamate. Can also use m-DAP instead of LL-DAP as the amino-group donor, and oxaloacetate or pyruvate as the amino-group acceptor. This Desulfitobacterium hafniense (strain DSM 10664 / DCB-2) protein is LL-diaminopimelate aminotransferase.